Here is a 309-residue protein sequence, read N- to C-terminus: Ketosamine-3-kinase (309 aa).

S20 carries the post-translational modification Phosphoserine. 89–91 (EHL) is an ATP binding site. The active-site Proton acceptor is the D217.

Belongs to the fructosamine kinase family.

It carries out the reaction N(6)-D-ribulosyl-L-lysyl-[protein] + ATP = N(6)-(3-O-phospho-D-ribulosyl)-L-lysyl-[protein] + ADP + H(+). It catalyses the reaction N(6)-(D-psicosyl)-L-lysyl-[protein] + ATP = N(6)-(3-O-phospho-D-psicosyl)-L-lysyl-[protein] + ADP + H(+). Ketosamine-3-kinase involved in protein deglycation by mediating phosphorylation of ribuloselysine and psicoselysine on glycated proteins, to generate ribuloselysine-3 phosphate and psicoselysine-3 phosphate, respectively. Ribuloselysine-3 phosphate and psicoselysine-3 phosphate adducts are unstable and decompose under physiological conditions. Not able to phosphorylate fructoselysine. This Mus musculus (Mouse) protein is Ketosamine-3-kinase.